A 203-amino-acid polypeptide reads, in one-letter code: MFSVGLTGGIGSGKTTVSNLFGALGATIVDTDLIAHRITAPHGLAMPFIEREFGAQFVAADGSLDRAKMRALIFSDESARKRLEAITHPLIREETEREAGAAHGAYVVFVVPLLVESGTWEARVDRVLVVDCDVETQIARVMSRNGFAREQVEAIVARQASRDARLAAADDVIVNDNASLDELAAEVAALHQRYLGYAAAAPN.

In terms of domain architecture, DPCK spans 3 to 201 (SVGLTGGIGS…QRYLGYAAAA (199 aa)). 11–16 (GSGKTT) contributes to the ATP binding site.

It belongs to the CoaE family.

It localises to the cytoplasm. It catalyses the reaction 3'-dephospho-CoA + ATP = ADP + CoA + H(+). The protein operates within cofactor biosynthesis; coenzyme A biosynthesis; CoA from (R)-pantothenate: step 5/5. Its function is as follows. Catalyzes the phosphorylation of the 3'-hydroxyl group of dephosphocoenzyme A to form coenzyme A. In Burkholderia thailandensis (strain ATCC 700388 / DSM 13276 / CCUG 48851 / CIP 106301 / E264), this protein is Dephospho-CoA kinase.